Here is a 477-residue protein sequence, read N- to C-terminus: Probable cytosolic Fe-S cluster assembly factor GM20417 (477 aa).

Positions 23, 68, 71, 74, 187, 243, 395, and 399 each coordinate [4Fe-4S] cluster.

Belongs to the NARF family.

Its function is as follows. Component of the cytosolic iron-sulfur (Fe/S) protein assembly machinery. Required for maturation of extramitochondrial Fe/S proteins. This chain is Probable cytosolic Fe-S cluster assembly factor GM20417, found in Drosophila sechellia (Fruit fly).